A 288-amino-acid chain; its full sequence is Elongation factor Ts (288 aa).

Residues 82-85 form an involved in Mg(2+) ion dislocation from EF-Tu region; the sequence is TDFV.

The protein belongs to the EF-Ts family.

The protein resides in the cytoplasm. Its function is as follows. Associates with the EF-Tu.GDP complex and induces the exchange of GDP to GTP. It remains bound to the aminoacyl-tRNA.EF-Tu.GTP complex up to the GTP hydrolysis stage on the ribosome. This chain is Elongation factor Ts, found in Chlorobaculum parvum (strain DSM 263 / NCIMB 8327) (Chlorobium vibrioforme subsp. thiosulfatophilum).